Consider the following 1657-residue polypeptide: Thrombospondin type-1 domain-containing protein 7A (1657 aa).

The first 47 residues, 1–47 (MGLQARRWASGSRGAAGPRRGVLQLLPLPLPLPLLLLLLLRPGAGRA), serve as a signal peptide directing secretion. Residues 48 to 1607 (AAQGEAEAPT…FGPDGRLKTW (1560 aa)) lie on the Extracellular side of the membrane. TSP type-1 domains are found at residues 57 to 116 (TLYL…KVCD), 120 to 192 (ELYD…IPCQ), and 194 to 247 (DCIV…SPCE). N-linked (GlcNAc...) asparagine glycosylation occurs at Asn234. The disordered stretch occupies residues 265–311 (MPHSRQVRQARRRGKNKEREKDRSKGVKDPEARELIKKKRNRNRQNR). Residues 267 to 315 (HSRQVRQARRRGKNKEREKDRSKGVKDPEARELIKKKRNRNRQNRQENK) are a coiled coil. Basic residues predominate over residues 269 to 280 (RQVRQARRRGKN). The segment covering 281 to 299 (KEREKDRSKGVKDPEAREL) has biased composition (basic and acidic residues). Positions 300-309 (IKKKRNRNRQ) are enriched in basic residues. N-linked (GlcNAc...) asparagine glycosylation occurs at Asn332. TSP type-1 domains lie at 360–416 (ECQV…LSQG), 423–510 (ATYG…IPCP), 512–574 (ECEV…PACY), 634–695 (DCVL…HPCT), 696–769 (VYHW…LPCK), 771–831 (DCIV…QACQ), 832–904 (SYRW…IPCQ), 906–959 (DCQL…CPCD), 960–1033 (KYNA…IPCP), 1035–1095 (DCKL…SDCN), 1096–1163 (QYLW…LPCP), 1166–1220 (CVIS…KNCY), 1221–1284 (HYDY…VECP), 1286–1341 (NCQL…KPCY), 1342–1412 (RWQY…QPCP), and 1414–1475 (DCYL…GQCY). Disulfide bonds link Cys435-Cys505, Cys455-Cys509, and Cys466-Cys494. A glycan (N-linked (GlcNAc...) asparagine) is linked at Asn450. An N-linked (GlcNAc...) asparagine glycan is attached at Asn500. 2 disulfide bridges follow: Cys635–Cys677 and Cys646–Cys650. Asn679 carries an N-linked (GlcNAc...) asparagine glycan. Cystine bridges form between Cys689/Cys694, Cys707/Cys764, Cys728/Cys768, Cys739/Cys752, Cys772/Cys814, Cys783/Cys787, and Cys824/Cys830. Asn717 carries N-linked (GlcNAc...) asparagine glycosylation. A glycan (N-linked (GlcNAc...) asparagine) is linked at Asn968. Cystine bridges form between Cys972–Cys1028, Cys994–Cys1032, Cys1005–Cys1018, Cys1036–Cys1073, Cys1047–Cys1051, and Cys1090–Cys1094. Asn1043 carries N-linked (GlcNAc...) asparagine glycosylation. A glycan (N-linked (GlcNAc...) asparagine) is linked at Asn1182. Cys1213 and Cys1219 are disulfide-bonded. Asn1225 carries an N-linked (GlcNAc...) asparagine glycan. 12 disulfides stabilise this stretch: Cys1232–Cys1279, Cys1240–Cys1283, Cys1251–Cys1264, Cys1287–Cys1325, Cys1298–Cys1302, Cys1335–Cys1340, Cys1351–Cys1407, Cys1358–Cys1411, Cys1369–Cys1388, Cys1415–Cys1459, Cys1426–Cys1430, and Cys1469–Cys1474. Asn1276 is a glycosylation site (N-linked (GlcNAc...) asparagine). Asn1366 carries an N-linked (GlcNAc...) asparagine glycan. Asn1500 and Asn1547 each carry an N-linked (GlcNAc...) asparagine glycan. Positions 1570 to 1591 (DVKTSRAVHPTQPSSNPAGRGR) are disordered. A helical membrane pass occupies residues 1608 to 1628 (VYGVAAGAFVLLIFIVSMIYL). Over 1629-1657 (ACKKPKKPQRRQNNRLKPLTLAYDGDADM) the chain is Cytoplasmic.

Post-translationally, proteolytic cleavage in the extracellular region generates a 210 kDa soluble form. Extensively N-glycosylated. In terms of tissue distribution, detected on kidney podocytes along the glomerular capillary wall (at protein level).

The protein localises to the cell membrane. The protein resides in the cell projection. Its subcellular location is the secreted. Its function is as follows. Plays a role in actin cytoskeleton rearrangement. Functionally, the soluble form promotes endothelial cell migration and filopodia formation during sprouting angiogenesis via a FAK-dependent mechanism. The chain is Thrombospondin type-1 domain-containing protein 7A (THSD7A) from Homo sapiens (Human).